Reading from the N-terminus, the 145-residue chain is Bacilliredoxin GK1781 (145 aa).

The protein belongs to the bacilliredoxin family.

The protein is Bacilliredoxin GK1781 of Geobacillus kaustophilus (strain HTA426).